A 156-amino-acid chain; its full sequence is 6,7-dimethyl-8-ribityllumazine synthase (156 aa).

Residues phenylalanine 23, 57–59 (AFE), and 81–83 (AVI) each bind 5-amino-6-(D-ribitylamino)uracil. 86–87 (ST) is a (2S)-2-hydroxy-3-oxobutyl phosphate binding site. Histidine 89 functions as the Proton donor in the catalytic mechanism. Phenylalanine 114 contributes to the 5-amino-6-(D-ribitylamino)uracil binding site. A (2S)-2-hydroxy-3-oxobutyl phosphate-binding site is contributed by arginine 128.

This sequence belongs to the DMRL synthase family.

It carries out the reaction (2S)-2-hydroxy-3-oxobutyl phosphate + 5-amino-6-(D-ribitylamino)uracil = 6,7-dimethyl-8-(1-D-ribityl)lumazine + phosphate + 2 H2O + H(+). It functions in the pathway cofactor biosynthesis; riboflavin biosynthesis; riboflavin from 2-hydroxy-3-oxobutyl phosphate and 5-amino-6-(D-ribitylamino)uracil: step 1/2. In terms of biological role, catalyzes the formation of 6,7-dimethyl-8-ribityllumazine by condensation of 5-amino-6-(D-ribitylamino)uracil with 3,4-dihydroxy-2-butanone 4-phosphate. This is the penultimate step in the biosynthesis of riboflavin. The sequence is that of 6,7-dimethyl-8-ribityllumazine synthase from Campylobacter lari (strain RM2100 / D67 / ATCC BAA-1060).